Reading from the N-terminus, the 680-residue chain is UvrABC system protein B (680 aa).

Positions Ser27–Gly192 constitute a Helicase ATP-binding domain. ATP is bound at residue Gly40 to Thr47. The Beta-hairpin signature appears at Tyr93 to Ile116. The Helicase C-terminal domain occupies Gln432 to Val594. The region spanning Ala637–His672 is the UVR domain.

It belongs to the UvrB family. As to quaternary structure, forms a heterotetramer with UvrA during the search for lesions. Interacts with UvrC in an incision complex.

Its subcellular location is the cytoplasm. The UvrABC repair system catalyzes the recognition and processing of DNA lesions. A damage recognition complex composed of 2 UvrA and 2 UvrB subunits scans DNA for abnormalities. Upon binding of the UvrA(2)B(2) complex to a putative damaged site, the DNA wraps around one UvrB monomer. DNA wrap is dependent on ATP binding by UvrB and probably causes local melting of the DNA helix, facilitating insertion of UvrB beta-hairpin between the DNA strands. Then UvrB probes one DNA strand for the presence of a lesion. If a lesion is found the UvrA subunits dissociate and the UvrB-DNA preincision complex is formed. This complex is subsequently bound by UvrC and the second UvrB is released. If no lesion is found, the DNA wraps around the other UvrB subunit that will check the other stand for damage. The sequence is that of UvrABC system protein B from Nitratidesulfovibrio vulgaris (strain DSM 19637 / Miyazaki F) (Desulfovibrio vulgaris).